Consider the following 420-residue polypeptide: D-tagatose-1,6-bisphosphate aldolase subunit GatZ (420 aa).

The protein belongs to the GatZ/KbaZ family. GatZ subfamily. As to quaternary structure, forms a complex with GatY.

Its pathway is carbohydrate metabolism; D-tagatose 6-phosphate degradation; D-glyceraldehyde 3-phosphate and glycerone phosphate from D-tagatose 6-phosphate: step 2/2. Component of the tagatose-1,6-bisphosphate aldolase GatYZ that is required for full activity and stability of the Y subunit. Could have a chaperone-like function for the proper and stable folding of GatY. When expressed alone, GatZ does not show any aldolase activity. Is involved in the catabolism of galactitol. The polypeptide is D-tagatose-1,6-bisphosphate aldolase subunit GatZ (Escherichia coli O45:K1 (strain S88 / ExPEC)).